Reading from the N-terminus, the 493-residue chain is Glycerol kinase (493 aa).

Residue Thr13 coordinates ADP. Residues Thr13, Thr14, and Ser15 each coordinate ATP. Position 13 (Thr13) interacts with sn-glycerol 3-phosphate. Arg17 contributes to the ADP binding site. Arg83, Glu84, Tyr135, and Asp244 together coordinate sn-glycerol 3-phosphate. Glycerol-binding residues include Arg83, Glu84, Tyr135, Asp244, and Gln245. The ADP site is built by Thr266 and Gly309. ATP is bound by residues Thr266, Gly309, Gln313, and Gly410. Residues Gly410 and Asn414 each contribute to the ADP site.

Belongs to the FGGY kinase family.

It catalyses the reaction glycerol + ATP = sn-glycerol 3-phosphate + ADP + H(+). Its pathway is polyol metabolism; glycerol degradation via glycerol kinase pathway; sn-glycerol 3-phosphate from glycerol: step 1/1. Inhibited by fructose 1,6-bisphosphate (FBP). Its function is as follows. Key enzyme in the regulation of glycerol uptake and metabolism. Catalyzes the phosphorylation of glycerol to yield sn-glycerol 3-phosphate. This chain is Glycerol kinase, found in Shewanella pealeana (strain ATCC 700345 / ANG-SQ1).